The sequence spans 306 residues: Fe-S cluster assembly protein dre2 (306 aa).

The interval 21–150 (NVTQKRSLLL…EKPQYQEAAV (130 aa)) is N-terminal SAM-like domain. Residues 151–196 (PLRFGANKRKNKISPEPVKIESVGFVDNYDDDELINEDDLLDEEDL) form a linker region. [2Fe-2S] cluster-binding residues include C206, C218, C221, and C223. The tract at residues 206–223 (CQPETAKKRRRACKDCTC) is fe-S binding site A. The [4Fe-4S] cluster site is built by C269, C272, C280, and C283. 2 short sequence motifs (cx2C motif) span residues 269 to 272 (CNSC) and 280 to 283 (CASC). The interval 269–283 (CNSCSLGDAFRCASC) is fe-S binding site B.

Belongs to the anamorsin family. Monomer. Interacts with tah18. Interacts with mia40. [2Fe-2S] cluster serves as cofactor. Requires [4Fe-4S] cluster as cofactor.

The protein resides in the cytoplasm. Its subcellular location is the mitochondrion intermembrane space. Its function is as follows. Component of the cytosolic iron-sulfur (Fe-S) protein assembly (CIA) machinery required for the maturation of extramitochondrial Fe-S proteins. Part of an electron transfer chain functioning in an early step of cytosolic Fe-S biogenesis, facilitating the de novo assembly of a [4Fe-4S] cluster on the scaffold complex cfd1-nbp35. Electrons are transferred to dre2 from NADPH via the FAD- and FMN-containing protein tah18. Tah18-dre2 are also required for the assembly of the diferric tyrosyl radical cofactor of ribonucleotide reductase (RNR), probably by providing electrons for reduction during radical cofactor maturation in the catalytic small subunit rnr2. The polypeptide is Fe-S cluster assembly protein dre2 (Talaromyces stipitatus (strain ATCC 10500 / CBS 375.48 / QM 6759 / NRRL 1006) (Penicillium stipitatum)).